A 167-amino-acid chain; its full sequence is Inclusion membrane protein G (167 aa).

A run of 2 helical transmembrane segments spans residues 33-57 and 63-88; these read VVLALSLFAVFASGSLSILSAAVLF and VLPYLLILTTALLGCVYAVIVLLRSL. The tract at residues 94-167 is sufficient for interaction with human 14-3-3 beta protein; it reads SCKKRSPEEI…DNSRSRSRSF (74 aa). Residues 97-167 form a disordered region; it reads KRSPEEIEGA…DNSRSRSRSF (71 aa). Positions 122 to 135 are enriched in low complexity; it reads ESASPQASPTSSTL. Residues 161 to 166 carry the Phosphorylation-dependent binding motif motif; sequence RSRSRS. Ser166 is subject to Phosphoserine.

In infected HeLa cells colocalizes with host 14-3-3 protein (YWHAB); phosphorylation of Ser-166 is probably required. Interacts with Pkn1. In terms of processing, phosphorylated, possibly at more than one position, in infected HeLa cells. Phosphorylated by chlamydial kinase Pnk1.

It is found in the secreted. It localises to the host vacuole. The protein resides in the host pathogen-containing vacuole. The protein localises to the host pathogen-containing vacuole membrane. Functionally, inclusion membrane protein probably involved in early modification events of the chlamydial inclusion. This is Inclusion membrane protein G from Chlamydia trachomatis serovar L2 (strain ATCC VR-902B / DSM 19102 / 434/Bu).